Reading from the N-terminus, the 410-residue chain is Phosphoglycerate kinase (410 aa).

Residues 19-21 (DLN), arginine 34, 57-60 (HQGK), arginine 114, and arginine 154 each bind substrate. ATP contacts are provided by residues glutamate 332 and 358 to 361 (GGHS).

Belongs to the phosphoglycerate kinase family. As to quaternary structure, homodimer.

It localises to the cytoplasm. It carries out the reaction (2R)-3-phosphoglycerate + ATP = (2R)-3-phospho-glyceroyl phosphate + ADP. It functions in the pathway carbohydrate degradation; glycolysis; pyruvate from D-glyceraldehyde 3-phosphate: step 2/5. The protein is Phosphoglycerate kinase (pgk) of Pyrococcus furiosus (strain ATCC 43587 / DSM 3638 / JCM 8422 / Vc1).